Here is a 709-residue protein sequence, read N- to C-terminus: Potassium-transporting ATPase ATP-binding subunit (709 aa).

The next 4 helical transmembrane spans lie at 55–75 (VMLVVLVGAVITTLAFLRDLA), 86–106 (GLVAAFLWFTVLFANFAEAMA), 236–256 (IALNILLAGLTIIFLLAVVTL), and 269–289 (VVVLVALLVCLIPTTIGALLS). Aspartate 324 functions as the 4-aspartylphosphate intermediate in the catalytic mechanism. ATP-binding positions include aspartate 361, glutamate 365, 395–402 (FTAETRMS), and lysine 417. Residues aspartate 545 and aspartate 549 each contribute to the Mg(2+) site. 3 helical membrane-spanning segments follow: residues 615–635 (FAIIPAMFVGLYPVLDKLNVM), 643–663 (AILSAVIFNALVIVALIPLAL), and 688–708 (GLVVPFIGIKLVDLVIVALGV).

This sequence belongs to the cation transport ATPase (P-type) (TC 3.A.3) family. Type IA subfamily. The system is composed of three essential subunits: KdpA, KdpB and KdpC.

The protein resides in the cell membrane. The enzyme catalyses K(+)(out) + ATP + H2O = K(+)(in) + ADP + phosphate + H(+). Functionally, part of the high-affinity ATP-driven potassium transport (or Kdp) system, which catalyzes the hydrolysis of ATP coupled with the electrogenic transport of potassium into the cytoplasm. This subunit is responsible for energy coupling to the transport system and for the release of the potassium ions to the cytoplasm. In Mycobacterium tuberculosis (strain ATCC 25618 / H37Rv), this protein is Potassium-transporting ATPase ATP-binding subunit.